The chain runs to 390 residues: S-adenosylmethionine synthase 2 (390 aa).

Glu9 contributes to the Mg(2+) binding site. An ATP-binding site is contributed by His15. Glu43 contacts K(+). Positions 56 and 99 each coordinate L-methionine. ATP is bound by residues 167–169 (DGK), 235–238 (SGRF), Asp246, 252–253 (RK), Ala269, Lys273, and Lys277. An L-methionine-binding site is contributed by Asp246. Residue Lys277 coordinates L-methionine.

This sequence belongs to the AdoMet synthase family. Homotetramer. Mn(2+) serves as cofactor. Requires Mg(2+) as cofactor. Co(2+) is required as a cofactor. It depends on K(+) as a cofactor.

It is found in the cytoplasm. It carries out the reaction L-methionine + ATP + H2O = S-adenosyl-L-methionine + phosphate + diphosphate. Its pathway is amino-acid biosynthesis; S-adenosyl-L-methionine biosynthesis; S-adenosyl-L-methionine from L-methionine: step 1/1. Catalyzes the formation of S-adenosylmethionine from methionine and ATP. The reaction comprises two steps that are both catalyzed by the same enzyme: formation of S-adenosylmethionine (AdoMet) and triphosphate, and subsequent hydrolysis of the triphosphate. The protein is S-adenosylmethionine synthase 2 (SAM2) of Actinidia chinensis var. chinensis (Chinese soft-hair kiwi).